Reading from the N-terminus, the 237-residue chain is 2,3-bisphosphoglycerate-dependent phosphoglycerate mutase (237 aa).

Substrate contacts are provided by residues 10–17 (RHGESKWN), 23–24 (TG), R62, 89–92 (ERHY), K100, 116–117 (RR), and 185–186 (GN). H11 (tele-phosphohistidine intermediate) is an active-site residue. E89 acts as the Proton donor/acceptor in catalysis.

Belongs to the phosphoglycerate mutase family. BPG-dependent PGAM subfamily. In terms of assembly, homodimer.

The catalysed reaction is (2R)-2-phosphoglycerate = (2R)-3-phosphoglycerate. The protein operates within carbohydrate degradation; glycolysis; pyruvate from D-glyceraldehyde 3-phosphate: step 3/5. In terms of biological role, catalyzes the interconversion of 2-phosphoglycerate and 3-phosphoglycerate. The sequence is that of 2,3-bisphosphoglycerate-dependent phosphoglycerate mutase from Baumannia cicadellinicola subsp. Homalodisca coagulata.